The sequence spans 789 residues: Mediator of RNA polymerase II transcription subunit 15 (789 aa).

Residues 9–73 (DWRSAAFRQK…IHFRDIHNKK (65 aa)) form an interaction with SREBF1 region. Disordered stretches follow at residues 88–140 (LTGG…APHG) and 257–326 (QQQA…PLVS). A compositionally biased stretch (low complexity) spans 89–102 (TGGPTPGAAGIGMP). Residues 108-118 (QSLGGMGGLGA) show a composition bias toward gly residues. Composition is skewed to low complexity over residues 257–274 (QQQALQAQPPMQQPSMQQ), 282–291 (ALPQQLSQLH), and 302–326 (AQQSPIAQNQPPQIPPQSQSQPLVS). The residue at position 347 (R347) is an Asymmetric dimethylarginine. Residues 404 to 531 (RFPPTSTMSA…PAGSSQAEEQ (128 aa)) form a disordered region. The span at 407 to 426 (PTSTMSAGPSSSISLGGQPT) shows a compositional bias: polar residues. The span at 427–450 (TQVSQSSLTMLSSPSPGQQVQTPQ) shows a compositional bias: low complexity. Pro residues predominate over residues 451–463 (SMPPPPQPSPQPG). The span at 464 to 483 (SQPNSNVSSGPAPSPSSFLP) shows a compositional bias: low complexity. 2 stretches are compositionally biased toward polar residues: residues 494–504 (VTARTPQNFSV) and 512–530 (TPVNPSSVMSPAGSSQAEE). The short motif at 548 to 565 (RRMINKIDKNEDRKKDLS) is the Nuclear localization signal element. The residue at position 604 (T604) is a Phosphothreonine.

The protein belongs to the Mediator complex subunit 15 family. As to quaternary structure, component of the Mediator complex, which is composed of MED1, MED4, MED6, MED7, MED8, MED9, MED10, MED11, MED12, MED13, MED13L, MED14, MED15, MED16, MED17, MED18, MED19, MED20, MED21, MED22, MED23, MED24, MED25, MED26, MED27, MED29, MED30, MED31, CCNC, CDK8 and CDC2L6/CDK11. The MED12, MED13, CCNC and CDK8 subunits form a distinct module termed the CDK8 module. Mediator containing the CDK8 module is less active than Mediator lacking this module in supporting transcriptional activation. Individual preparations of the Mediator complex lacking one or more distinct subunits have been variously termed ARC, CRSP, DRIP, PC2, SMCC and TRAP. Interacts with SMAD2, SMAD3, SREBF1 and SREBF2. Interacts with WWTR1. Interacts with TRIM11. Ubiquitinated by TRIM11, leading to proteasomal degradation.

The protein resides in the cytoplasm. The protein localises to the nucleus. Functionally, component of the Mediator complex, a coactivator involved in the regulated transcription of nearly all RNA polymerase II-dependent genes. Mediator functions as a bridge to convey information from gene-specific regulatory proteins to the basal RNA polymerase II transcription machinery. Mediator is recruited to promoters by direct interactions with regulatory proteins and serves as a scaffold for the assembly of a functional preinitiation complex with RNA polymerase II and the general transcription factors. Required for cholesterol-dependent gene regulation. Positively regulates the Nodal signaling pathway. The protein is Mediator of RNA polymerase II transcription subunit 15 (Med15) of Mus musculus (Mouse).